The sequence spans 155 residues: Small ribosomal subunit protein uS7cz/uS7cy (155 aa).

Belongs to the universal ribosomal protein uS7 family. Part of the 30S ribosomal subunit.

It is found in the plastid. The protein resides in the chloroplast. One of the primary rRNA binding proteins, it binds directly to 16S rRNA where it nucleates assembly of the head domain of the 30S subunit. In Phaseolus vulgaris (Kidney bean), this protein is Small ribosomal subunit protein uS7cz/uS7cy (rps7-A).